The following is a 1495-amino-acid chain: DNA-directed RNA polymerase subunit 1 (1495 aa).

This sequence belongs to the RNA polymerase beta' chain family.

The protein resides in the virion. It carries out the reaction RNA(n) + a ribonucleoside 5'-triphosphate = RNA(n+1) + diphosphate. Its function is as follows. DNA-dependent RNA polymerase catalyzes the transcription of DNA into RNA using the four ribonucleoside triphosphates as substrates. The sequence is that of DNA-directed RNA polymerase subunit 1 (RPO1) from Acanthamoeba polyphaga (Amoeba).